The sequence spans 470 residues: Argininosuccinate lyase (470 aa).

It belongs to the lyase 1 family. Argininosuccinate lyase subfamily.

Its subcellular location is the cytoplasm. The catalysed reaction is 2-(N(omega)-L-arginino)succinate = fumarate + L-arginine. It functions in the pathway amino-acid biosynthesis; L-arginine biosynthesis; L-arginine from L-ornithine and carbamoyl phosphate: step 3/3. This chain is Argininosuccinate lyase, found in Mycobacterium sp. (strain MCS).